Reading from the N-terminus, the 183-residue chain is Ankyrin repeat domain-containing protein 39 (183 aa).

4 ANK repeats span residues 30-59 (DFERGIWSAALNGDLGRVKHLIQKAEDPSQ), 63-92 (AGYTALHYASRNGHYAVCQFLLESGAKCDA), 96-125 (GGATALHRASYCGHTEIARLLLSHGSNPRV), and 129-158 (DGMTSLHKAAERGHGDICSLLLQHSPALKA). Position 153 is a phosphoserine (Ser153).

This sequence belongs to the ANKRD39 family.

The protein is Ankyrin repeat domain-containing protein 39 (ANKRD39) of Homo sapiens (Human).